We begin with the raw amino-acid sequence, 375 residues long: Actin-binding Rho-activating protein (375 aa).

Residues 37 to 101 (ANENSTRQAQ…ATEVSHIKRK (65 aa)) are disordered. The span at 80 to 101 (PDGDREGRGSEEATEVSHIKRK) shows a compositional bias: basic and acidic residues. 2 positions are modified to phosphoserine: S150 and S182. The segment at 175–197 (EPKWKSDSIDTEDSGYGGDMEER) is disordered. Actin-binding regions lie at residues 193 to 293 (DMEE…AERA) and 294 to 375 (KRAE…TLLE). 2 interaction with actin regions span residues 234–279 (SQVD…GDEG) and 346–375 (MRAR…TLLE).

Binds F-actin and ABLIM1, ABLIM2 and ABLIM3. Interaction with ABLIM2 and ABLIM3 enhances activity. In terms of tissue distribution, predominantly expressed in heart and skeletal muscle, and expressed at lower levels in adrenal gland, brain, kidney, liver, and testis.

It is found in the cytoplasm. It localises to the myofibril. The protein localises to the sarcomere. The protein resides in the cytoskeleton. Functionally, acts as an activator of serum response factor (SRF)-dependent transcription possibly by inducing nuclear translocation of MKL1 or MKL2 and through a mechanism requiring Rho-actin signaling. The protein is Actin-binding Rho-activating protein of Rattus norvegicus (Rat).